The primary structure comprises 392 residues: Nucleosome assembly protein 1-like 1-A (392 aa).

The interval 1–37 (MANIDNKGQTELDQQDMEDVEDVEEEETGEDANSKAR) is disordered. Residues 13-30 (DQQDMEDVEDVEEEETGE) show a composition bias toward acidic residues. The NAP1L motif signature appears at 126 to 150 (YEPTEEECEWKVEEEDISGDLKEKA). A Nuclear localization signal motif is present at residues 273-279 (IKKKQKH). The span at 346–377 (AIEDDDDDYDEEGEEADDEEGEEEADEDNDPD) shows a compositional bias: acidic residues. The interval 346 to 392 (AIEDDDDDYDEEGEEADDEEGEEEADEDNDPDYEPKKGQNPAECKQQ) is disordered.

Belongs to the nucleosome assembly protein (NAP) family. In terms of assembly, forms homomultimers. Interacts with histone B4. Interacts with the B-type cyclins ccnb1 and ccnb2. In terms of processing, phosphorylated by cyclin B-cdc2 kinase complexes. In terms of tissue distribution, initially expressed throughout the embryo with expression higher at the animal pole. Becomes localized to presumptive ectoderm by gastrula stages. By stage 18 (neurula), expressed in the neural plate and posterior to the cement gland. In late neurula/early tailbud stages, expressed in the neural crest, neural tube, eyes, tailbud and ventral blood islands. Adult expression is predominantly in ovaries.

It is found in the cytoplasm. The protein localises to the nucleus. In terms of biological role, acts as a chaperone for the linker histone to facilitate deposition of histone B4 onto linker DNA. Required for both remodeling of sperm chromatin into nucleosomes, and linker histone binding to nucleosome core dimers. Plays a role in tissue-specific gene regulation. Required for primitive hemopoiesis, acting upstream of tal1/scl. This Xenopus laevis (African clawed frog) protein is Nucleosome assembly protein 1-like 1-A (nap1l1-a).